Reading from the N-terminus, the 262-residue chain is Type II restriction enzyme HinfI (262 aa).

It catalyses the reaction Endonucleolytic cleavage of DNA to give specific double-stranded fragments with terminal 5'-phosphates.. In terms of biological role, a P subtype restriction enzyme that recognizes the double-stranded sequence 5'-GANTC-3' and cleaves after G-1. This Haemophilus influenzae protein is Type II restriction enzyme HinfI (hinfIR).